The chain runs to 699 residues: Elongation factor G 1 (699 aa).

Positions glutamate 8 to isoleucine 290 constitute a tr-type G domain. GTP-binding positions include alanine 17–threonine 24, aspartate 88–histidine 92, and asparagine 142–aspartate 145.

The protein belongs to the TRAFAC class translation factor GTPase superfamily. Classic translation factor GTPase family. EF-G/EF-2 subfamily.

It localises to the cytoplasm. In terms of biological role, catalyzes the GTP-dependent ribosomal translocation step during translation elongation. During this step, the ribosome changes from the pre-translocational (PRE) to the post-translocational (POST) state as the newly formed A-site-bound peptidyl-tRNA and P-site-bound deacylated tRNA move to the P and E sites, respectively. Catalyzes the coordinated movement of the two tRNA molecules, the mRNA and conformational changes in the ribosome. This Vibrio vulnificus (strain YJ016) protein is Elongation factor G 1.